A 354-amino-acid polypeptide reads, in one-letter code: MRITLENGIPAAAASDRTEWPGLIVIAGPTATGKSRQALLLAQRLGSPLLNADSRQVYREFDIGTAKPTPAEQALWPHELIDIVDPCHTYTVAEFQQAAQARIAEAHRQGQTPILVGGTGLYIQSVTAGLGIPAVPPQPQLRRQLETWPPEIRYAWLQQLDPVAAQHIHPHDAVRTLRALEIVYTTGKPASSLRRAHPPHYPILILGLRCPMPRLEQRIARRTAEMMERGWIEEVKTLRERYGPDLPLLQTLGYAEIGAYLEGRIPEAELQPLIVRRTRQFAKRQMTWFRAMLGIQKGHAYGTLSGRGRCVALWLDCEAEDLPEQIWKQVKAWMAAPTTVETSPAAAEHRLFDP.

28–35 (GPTATGKS) is a binding site for ATP. Residue 30-35 (TATGKS) participates in substrate binding. Residues 53-56 (DSRQ) are interaction with substrate tRNA.

Belongs to the IPP transferase family. In terms of assembly, monomer. Requires Mg(2+) as cofactor.

It carries out the reaction adenosine(37) in tRNA + dimethylallyl diphosphate = N(6)-dimethylallyladenosine(37) in tRNA + diphosphate. Its function is as follows. Catalyzes the transfer of a dimethylallyl group onto the adenine at position 37 in tRNAs that read codons beginning with uridine, leading to the formation of N6-(dimethylallyl)adenosine (i(6)A). In Synechococcus sp. (strain JA-2-3B'a(2-13)) (Cyanobacteria bacterium Yellowstone B-Prime), this protein is tRNA dimethylallyltransferase.